A 154-amino-acid chain; its full sequence is uncharacterized protein (154 aa).

Positions 47, 127, and 131 each coordinate a divalent metal cation. Tyr-150 is subject to Phosphotyrosine.

This sequence belongs to the DinB family. As to quaternary structure, homodimer.

This is an uncharacterized protein from Bacillus subtilis (strain 168).